The primary structure comprises 366 residues: Uroporphyrinogen decarboxylase (366 aa).

Substrate contacts are provided by residues 28–32 (RQAGR), Asp78, Tyr160, Thr215, and His333.

The protein belongs to the uroporphyrinogen decarboxylase family. Homodimer.

The protein resides in the cytoplasm. It carries out the reaction uroporphyrinogen III + 4 H(+) = coproporphyrinogen III + 4 CO2. It participates in porphyrin-containing compound metabolism; protoporphyrin-IX biosynthesis; coproporphyrinogen-III from 5-aminolevulinate: step 4/4. Its function is as follows. Catalyzes the decarboxylation of four acetate groups of uroporphyrinogen-III to yield coproporphyrinogen-III. In Paraburkholderia xenovorans (strain LB400), this protein is Uroporphyrinogen decarboxylase.